Reading from the N-terminus, the 867-residue chain is Heat shock 70 kDa protein 17 (867 aa).

An N-terminal signal peptide occupies residues 1 to 24; that stretch reads MGKIFSWLVVLLSLISLVPVPSES. Polar residues-rich tracts occupy residues 560–575 and 587–598; these read TIDSNTTTSTGNATDE and DAENSTASNTTA. 2 disordered regions span residues 560–607 and 829–867; these read TIDS…ASLG and PKPKPKIEKVTKTENTTKEEEQSKSSDEAAKEEESHDEL. Residues 833-867 show a composition bias toward basic and acidic residues; the sequence is PKIEKVTKTENTTKEEEQSKSSDEAAKEEESHDEL. Positions 865-867 match the Prevents secretion from ER motif; that stretch reads DEL.

This sequence belongs to the heat shock protein 70 (TC 1.A.33) family. HSP110/SSE subfamily.

The protein resides in the endoplasmic reticulum lumen. The protein is Heat shock 70 kDa protein 17 (HSP70-17) of Arabidopsis thaliana (Mouse-ear cress).